We begin with the raw amino-acid sequence, 125 residues long: Small ribosomal subunit protein uS13 (125 aa).

The disordered stretch occupies residues 101–125 (QRTKTNARTRKGKRKTVANKKIAAK).

Belongs to the universal ribosomal protein uS13 family. As to quaternary structure, part of the 30S ribosomal subunit. Forms a loose heterodimer with protein S19. Forms two bridges to the 50S subunit in the 70S ribosome.

Its function is as follows. Located at the top of the head of the 30S subunit, it contacts several helices of the 16S rRNA. In the 70S ribosome it contacts the 23S rRNA (bridge B1a) and protein L5 of the 50S subunit (bridge B1b), connecting the 2 subunits; these bridges are implicated in subunit movement. Contacts the tRNAs in the A and P-sites. This chain is Small ribosomal subunit protein uS13, found in Borrelia duttonii (strain Ly).